The sequence spans 177 residues: Disulfide bond formation protein B (177 aa).

Over 1–14 (MMVWNWIDRTPRRV) the chain is Cytoplasmic. The helical transmembrane segment at 15-31 (LALISLACVALLACGLY) threads the bilayer. The Periplasmic segment spans residues 32–49 (LQHVVGLVPCPMCIVQRY). A disulfide bridge connects residues cysteine 41 and cysteine 44. A helical membrane pass occupies residues 50–64 (ALIGLALLTGLASAR). Over 65 to 70 (SAKGWW) the chain is Cytoplasmic. The chain crosses the membrane as a helical span at residues 71–89 (LTLSALAALTAGFGATVAA). Residues 90 to 145 (RQSWLQWYPPQSVSCGRDFYGMIESFPLSRAIPMILRGSGDCAAVDWSLLGGSIAN) are Periplasmic-facing. Cysteines 104 and 131 form a disulfide. Residues 146 to 164 (WSFLCFALLGLLLLALLAR) form a helical membrane-spanning segment. Topologically, residues 165–177 (GVRGARQRAPAPV) are cytoplasmic.

The protein belongs to the DsbB family.

The protein localises to the cell inner membrane. In terms of biological role, required for disulfide bond formation in some periplasmic proteins. Acts by oxidizing the DsbA protein. This chain is Disulfide bond formation protein B, found in Verminephrobacter eiseniae (strain EF01-2).